The sequence spans 472 residues: Glutamate--tRNA ligase 1 (472 aa).

Residues 13-23 (PSPTGYLHIGG) carry the 'HIGH' region motif. Zn(2+) is bound by residues C102, C104, C129, and E131. The 'KMSKS' region motif lies at 239–243 (RLSKR). K242 serves as a coordination point for ATP.

Belongs to the class-I aminoacyl-tRNA synthetase family. Glutamate--tRNA ligase type 1 subfamily. In terms of assembly, monomer. The cofactor is Zn(2+).

The protein localises to the cytoplasm. The enzyme catalyses tRNA(Glu) + L-glutamate + ATP = L-glutamyl-tRNA(Glu) + AMP + diphosphate. Functionally, catalyzes the attachment of glutamate to tRNA(Glu) in a two-step reaction: glutamate is first activated by ATP to form Glu-AMP and then transferred to the acceptor end of tRNA(Glu). The chain is Glutamate--tRNA ligase 1 from Syntrophus aciditrophicus (strain SB).